The sequence spans 134 residues: RuBisCO chaperone RbcX (134 aa).

The interval 97–134 (SNGNHRRSLLERLTQVDSSSTDQTEPNPGESDTSEDSE) is disordered. Over residues 111–122 (QVDSSSTDQTEP) the composition is skewed to polar residues.

Belongs to the RbcX family. Homodimer (RbcX2). Interacts with the exposed C-terminal peptide of RbcL ('Glu-459-Asp-468'); binds 2 RbcL peptides per RbcX2, stapling them into an RbcL2 dimer. A slightly longer peptide binds with a higher affinity, but no long-term stable interaction with RbcL is detected. Contacts a second RbcL monomer via its peripheral polar surface.

It localises to the carboxysome. It is found in the cytoplasm. In terms of biological role, an RbcL-specific chaperone. Required for assembly of the RbcL8 core, acting downstream of the major chaperonin (GroEL-GroES). Acts on newly folded RbcL, has a transient dynamic interaction with RbcL and is eventually displaced by RbcS. The central cleft of the RbcX homodimer (RbcX2) binds the C-terminus of an RbcL monomer, stabilizing the C-terminus and probably preventing its reassociation with chaperonin GroEL-ES. At the same time the peripheral region of RbcX2 binds a second RbcL monomer, bridging the RbcL homodimers in the correct orientation. The RbcX2(2)-bound RbcL dimers then assemble into the RbcL8 core (RbcL8-(RbcX2)8). RbcS binding triggers the release of RbcX2. Required for optimal reconstitution of RuBisCO into its RbcL8S8 holoenzyme form upon expression of rbcL-rbcS subunits in E.coli, and probably also in situ. A frameshift mutation that replaces half the protein reduces accumulation of both RbcL and RbcS subunits and halves activity of RuBisCO in situ and in E.coli. In Picosynechococcus sp. (strain ATCC 27264 / PCC 7002 / PR-6) (Agmenellum quadruplicatum), this protein is RuBisCO chaperone RbcX.